The primary structure comprises 160 residues: Probable NADH dehydrogenase [ubiquinone] 1 beta subcomplex subunit 2, mitochondrial (160 aa).

Belongs to the complex I NDUFB2 subunit family. In terms of assembly, complex I is composed of 45 different subunits.

Its subcellular location is the mitochondrion inner membrane. Its function is as follows. Accessory subunit of the mitochondrial membrane respiratory chain NADH dehydrogenase (Complex I), that is believed not to be involved in catalysis. Complex I functions in the transfer of electrons from NADH to the respiratory chain. The immediate electron acceptor for the enzyme is believed to be ubiquinone. The polypeptide is Probable NADH dehydrogenase [ubiquinone] 1 beta subcomplex subunit 2, mitochondrial (Caenorhabditis elegans).